The chain runs to 1863 residues: Breast cancer type 1 susceptibility protein homolog (1863 aa).

The residue at position 1 (Met-1) is an N-acetylmethionine. An RING-type zinc finger spans residues 24–65 (CPICLELIKEPVSTKCDHIFCRFCMLKLLNQKKGPSQCPLCK). Lys-109 participates in a covalent cross-link: Glycyl lysine isopeptide (Lys-Gly) (interchain with G-Cter in SUMO2). A Phosphoserine modification is found at Ser-114. Basic and acidic residues-rich tracts occupy residues 231 to 240 (KDITNTEHHQ) and 248 to 260 (TTEK…HPEK). The segment at 231–266 (KDITNTEHHQSSNNDLNTTEKHATERHPEKYQGSSV) is disordered. Lys-300 participates in a covalent cross-link: Glycyl lysine isopeptide (Lys-Gly) (interchain with G-Cter in SUMO2). The interval 305–336 (NKSKQPGLARSQHNRWTGSKETCNDRQTPSTE) is disordered. A compositionally biased stretch (polar residues) spans 318–334 (NRWTGSKETCNDRQTPS). A Glycyl lysine isopeptide (Lys-Gly) (interchain with G-Cter in SUMO2) cross-link involves residue Lys-338. Phosphoserine occurs at positions 394, 397, 422, and 433. Glycyl lysine isopeptide (Lys-Gly) (interchain with G-Cter in SUMO2) cross-links involve residues Lys-442, Lys-458, and Lys-518. A Phosphoserine modification is found at Ser-550. Residue Lys-582 forms a Glycyl lysine isopeptide (Lys-Gly) (interchain with G-Cter in SUMO2) linkage. Residues 653-699 (NYNQMPVRHSRNLQLMEDKESATGAKKSNKPNEQTSKRHASDTFPEL) form a disordered region. A phosphoserine mark is found at Ser-693, Ser-707, and Ser-724. Residues Lys-733 and Lys-738 each participate in a glycyl lysine isopeptide (Lys-Gly) (interchain with G-Cter in SUMO2) cross-link. Ser-752 and Ser-839 each carry phosphoserine. The disordered stretch occupies residues 886-914 (AHSRSLKKQSPKVTSECEQKEENQGKKES). Positions 900–914 (SECEQKEENQGKKES) are enriched in basic and acidic residues. Residues Lys-917 and Lys-986 each participate in a glycyl lysine isopeptide (Lys-Gly) (interchain with G-Cter in SUMO2) cross-link. A Phosphoserine; by CHEK2 modification is found at Ser-987. A Phosphoserine modification is found at Ser-1008. Polar residues predominate over residues 1042 to 1059 (SNINEVGSSTNEVGSSIN). Residues 1042-1062 (SNINEVGSSTNEVGSSINEVG) are disordered. Lys-1079 participates in a covalent cross-link: Glycyl lysine isopeptide (Lys-Gly) (interchain with G-Cter in SUMO2). Ser-1143, Ser-1189, Ser-1191, Ser-1211, Ser-1217, Ser-1218, Ser-1280, Ser-1328, Ser-1336, Ser-1342, and Ser-1387 each carry phosphoserine. The tract at residues 1323-1397 (RMRHQSESQG…QSEILTTQQR (75 aa)) is disordered. A compositionally biased stretch (acidic residues) spans 1342-1360 (SDDEERGTGLEEDNQEEQS). The span at 1373-1397 (ESETSVSEDCSRLSSQSEILTTQQR) shows a compositional bias: polar residues. Position 1394 is a phosphothreonine (Thr-1394). The segment at 1397–1424 (RDTMQDNLIKLQQEMAELEAVLEQHGSQ) is interaction with PALB2. 4 positions are modified to phosphoserine: Ser-1423, Ser-1457, Ser-1524, and Ser-1542. Residues 1442–1501 (LRNPEQSTSEKAVLTSQKSSEYPINQNPEGLSADKFEVSADSSTSKNKEPGVERSSPSKC) form a disordered region. The span at 1445 to 1470 (PEQSTSEKAVLTSQKSSEYPINQNPE) shows a compositional bias: polar residues. A disordered region spans residues 1540–1618 (EKSGPHDLME…ESAQSPAAAH (79 aa)). The span at 1607-1618 (VAESAQSPAAAH) shows a compositional bias: polar residues. 2 consecutive BRCT domains span residues 1642 to 1736 (STER…DFEV) and 1756 to 1855 (PDRK…TYLI).

Heterodimer with BARD1. Part of the BRCA1-associated genome surveillance complex (BASC), which contains BRCA1, MSH2, MSH6, MLH1, ATM, BLM, PMS2 and the MRE11-RAD50-NBN protein (MRN) complex. This association could be a dynamic process changing throughout the cell cycle and within subnuclear domains. Component of the BRCA1-A complex, at least composed of BRCA1, BARD1, UIMC1/RAP80, ABRAXAS1, BRCC3/BRCC36, BABAM2 and BABAM1/NBA1. Interacts (via the BRCT domains) with ABRAXAS1 (phosphorylated form); this is important for recruitment to sites of DNA damage. Can form a heterotetramer with two molecules of ABRAXAS1 (phosphorylated form). Component of the BRCA1-RBBP8 complex. Interacts (via the BRCT domains) with RBBP8 ('Ser-327' phosphorylated form); the interaction ubiquitinates RBBP8, regulates CHEK1 activation, and involves RBBP8 in BRCA1-dependent G2/M checkpoint control on DNA damage. Associates with RNA polymerase II holoenzyme. Interacts with SMC1A, NELFB, DCLRE1C, CLSPN. CHEK1, CHEK2, BAP1, BRCC3, UBXN1 and PCLAF. Interacts (via BRCT domains) with BRIP1 (phosphorylated form). Interacts with FANCD2 (ubiquitinated form). Interacts with H2AX (phosphorylated on 'Ser-140'). Interacts (via the BRCT domains) with ACACA (phosphorylated form); the interaction prevents dephosphorylation of ACACA. Part of a BRCA complex containing BRCA1, BRCA2 and PALB2. Interacts directly with PALB2; the interaction is essential for its function in HRR. Interacts directly with BRCA2; the interaction occurs only in the presence of PALB2 which serves as the bridging protein. Interacts (via the BRCT domains) with LMO4; the interaction represses the transcriptional activity of BRCA1. Interacts (via the BRCT domains) with CCAR2 (via N-terminus); the interaction represses the transcriptional activator activity of BRCA1. Interacts with EXD2. Interacts (via C-terminus) with DHX9; this interaction is direct and links BRCA1 to the RNA polymerase II holoenzyme. Interacts with DNA helicase ZGRF1; the interaction is increased following DNA damage induction. In terms of processing, phosphorylated in response to IR, UV, and various stimuli that cause checkpoint activation, probably by ATM or ATR. Phosphorylation at Ser-987 by CHEK2 regulates mitotic spindle assembly. Phosphorylation by AURKA regulates centrosomal microtubule nucleation. Autoubiquitinated, undergoes 'Lys-6'-linked polyubiquitination. 'Lys-6'-linked polyubiquitination does not promote degradation.

It localises to the nucleus. Its subcellular location is the chromosome. The protein resides in the cytoplasm. It carries out the reaction S-ubiquitinyl-[E2 ubiquitin-conjugating enzyme]-L-cysteine + [acceptor protein]-L-lysine = [E2 ubiquitin-conjugating enzyme]-L-cysteine + N(6)-ubiquitinyl-[acceptor protein]-L-lysine.. Its pathway is protein modification; protein ubiquitination. In terms of biological role, E3 ubiquitin-protein ligase that specifically mediates the formation of 'Lys-6'-linked polyubiquitin chains and plays a central role in DNA repair by facilitating cellular responses to DNA damage. It is unclear whether it also mediates the formation of other types of polyubiquitin chains. The BRCA1-BARD1 heterodimer coordinates a diverse range of cellular pathways such as DNA damage repair, ubiquitination and transcriptional regulation to maintain genomic stability. Regulates centrosomal microtubule nucleation. Required for appropriate cell cycle arrests after ionizing irradiation in both the S-phase and the G2 phase of the cell cycle. Required for FANCD2 targeting to sites of DNA damage. Inhibits lipid synthesis by binding to inactive phosphorylated ACACA and preventing its dephosphorylation. Contributes to homologous recombination repair (HRR) via its direct interaction with PALB2, fine-tunes recombinational repair partly through its modulatory role in the PALB2-dependent loading of BRCA2-RAD51 repair machinery at DNA breaks. Component of the BRCA1-RBBP8 complex which regulates CHEK1 activation and controls cell cycle G2/M checkpoints on DNA damage via BRCA1-mediated ubiquitination of RBBP8. Acts as a transcriptional activator. The sequence is that of Breast cancer type 1 susceptibility protein homolog (BRCA1) from Macaca mulatta (Rhesus macaque).